The sequence spans 137 residues: Small heat shock protein IbpA (137 aa).

The 110-residue stretch at 28–137 (SQSNGGYPPY…ANKPRRIEIN (110 aa)) folds into the sHSP domain.

Belongs to the small heat shock protein (HSP20) family. As to quaternary structure, monomer. Forms homomultimers of about 100-150 subunits at optimal growth temperatures. Conformation changes to monomers at high temperatures or high ionic concentrations.

The protein localises to the cytoplasm. Its function is as follows. Associates with aggregated proteins, together with IbpB, to stabilize and protect them from irreversible denaturation and extensive proteolysis during heat shock and oxidative stress. Aggregated proteins bound to the IbpAB complex are more efficiently refolded and reactivated by the ATP-dependent chaperone systems ClpB and DnaK/DnaJ/GrpE. Its activity is ATP-independent. In Salmonella choleraesuis (strain SC-B67), this protein is Small heat shock protein IbpA.